The sequence spans 867 residues: Ataxin-7 (867 aa).

Residues 1 to 15 show a composition bias toward basic and acidic residues; it reads MSERAADDVRGEPRR. Residues 1–59 are disordered; it reads MSERAADDVRGEPRRAAGGAAAARQQQQQPQPLQPQRQHPPLRRPRAEDGGTGDTTTSA. Over residues 16–39 the composition is skewed to low complexity; that stretch reads AAGGAAAARQQQQQPQPLQPQRQH. Residue lysine 222 is modified to N6-acetyllysine. Lysine 243 participates in a covalent cross-link: Glycyl lysine isopeptide (Lys-Gly) (interchain with G-Cter in SUMO); alternate. Residue lysine 243 forms a Glycyl lysine isopeptide (Lys-Gly) (interchain with G-Cter in SUMO2); alternate linkage. In terms of domain architecture, SCA7 spans 320 to 387; sequence KRLSEREFDP…KAREKELIRH (68 aa). A compositionally biased stretch (basic and acidic residues) spans 379-400; sequence AREKELIRHDSQQVPHPLRDPH. Disordered regions lie at residues 379-483, 600-711, and 845-867; these read AREK…EESV, HGTT…SHSV, and TGNI…KARP. Composition is skewed to pro residues over residues 426 to 437 and 447 to 462; these read PQTPSLPRPPGC and IDPP…PLPA. Over residues 472–481 the composition is skewed to acidic residues; it reads EEGEGDDREE. Low complexity predominate over residues 619–647; it reads SVQSRQVSASSSPPSTPSGLSSVPSSPLS. Residues 649-659 are compositionally biased toward basic residues; it reads KPQKWKPSKSI. Residues 665-674 are compositionally biased toward polar residues; it reads SALSTNCHNA. Residues 689–711 show a composition bias toward low complexity; sequence SSPLLVPSSSSSSSSSSSSSHSV. Positions 846–860 are enriched in polar residues; sequence GNISGAQGLTNNSLL.

This sequence belongs to the ataxin-7 family. Component of the SAGA transcription coactivator-HAT complex, at least composed of SUPT3H, GCN5L2, TAF5L, TAF6L, SUPT7L, TADA3L, TAD1L, TAF10, TAF12, TRRAP, TAF9 and ATXN7. The STAGA core complex is associated with a subcomplex required for histone deubiquitination composed of ATXN7L3, ENY2 and USP22. Interacts with SORBS1, PSMC1 and CRX. Interacts with TRRAP, GCN5L2 and TAF10. Interacts with alpha tubulin. Post-translationally, proteolytically cleaved by caspase-7 (CASP7). Sumoylation has no effect on subcellular location or interaction with components of the STAGA complex. Widely expressed in adult tissues, with the highest expression in heart, brain, liver and kidney.

It is found in the nucleus. Its subcellular location is the nucleolus. The protein resides in the nucleus matrix. The protein localises to the cytoplasm. It localises to the cytoskeleton. In terms of biological role, acts as a component of the SAGA (aka STAGA) transcription coactivator-HAT complex. Mediates the interaction of SAGA complex with the CRX and is involved in CRX-dependent gene activation. Probably involved in tethering the deubiquitination module within the SAGA complex. Necessary for microtubule cytoskeleton stabilization. Involved in neurodegeneration. This Mus musculus (Mouse) protein is Ataxin-7 (Atxn7).